The primary structure comprises 245 residues: 23S rRNA (guanosine-2'-O-)-methyltransferase RlmB (245 aa).

3 residues coordinate S-adenosyl-L-methionine: Gly-197, Ile-217, and Leu-226.

This sequence belongs to the class IV-like SAM-binding methyltransferase superfamily. RNA methyltransferase TrmH family. RlmB subfamily.

It localises to the cytoplasm. The enzyme catalyses guanosine(2251) in 23S rRNA + S-adenosyl-L-methionine = 2'-O-methylguanosine(2251) in 23S rRNA + S-adenosyl-L-homocysteine + H(+). Specifically methylates the ribose of guanosine 2251 in 23S rRNA. This is 23S rRNA (guanosine-2'-O-)-methyltransferase RlmB from Pasteurella multocida (strain Pm70).